Here is a 216-residue protein sequence, read N- to C-terminus: GTPase IMAP family member GIMD1 (216 aa).

Residues 5–216 (KMIINLAVLG…ENHFQVLSFT (212 aa)) enclose the AIG1-type G domain. Residues 14–22 (GKTQSGKSS), Ser35, and 147–149 (HAE) contribute to the GTP site.

This sequence belongs to the TRAFAC class TrmE-Era-EngA-EngB-Septin-like GTPase superfamily. AIG1/Toc34/Toc159-like paraseptin GTPase family. IAN subfamily.

The sequence is that of GTPase IMAP family member GIMD1 (Gimd1) from Rattus norvegicus (Rat).